A 202-amino-acid polypeptide reads, in one-letter code: Matrix protein (202 aa).

Residues 35–38 (PPES) carry the PPXY motif motif. Residues 115–151 (KIRRTLVFQWAESRGPLDGEELEYSQEITWDDDSEFI) are essential for glycoprotein binding.

It belongs to the lyssavirus matrix protein family. In terms of assembly, homomultimer. Interacts with nucleoprotein and with the cytoplasmic domain of glycoprotein.

It is found in the virion membrane. The protein resides in the host endomembrane system. Functionally, plays a major role in assembly and budding of virion. Completely covers the ribonucleoprotein coil and keep it in condensed bullet-shaped form. Inhibits viral transcription and stimulates replication. Plays a major role in early induction of TRAIL-mediated apoptosis in infected neurons. The chain is Matrix protein (M) from Myotis mystacinus (Whiskered bat).